Reading from the N-terminus, the 448-residue chain is Probable glycine dehydrogenase (decarboxylating) subunit 1 (448 aa).

The protein belongs to the GcvP family. N-terminal subunit subfamily. As to quaternary structure, the glycine cleavage system is composed of four proteins: P, T, L and H. In this organism, the P 'protein' is a heterodimer of two subunits.

It carries out the reaction N(6)-[(R)-lipoyl]-L-lysyl-[glycine-cleavage complex H protein] + glycine + H(+) = N(6)-[(R)-S(8)-aminomethyldihydrolipoyl]-L-lysyl-[glycine-cleavage complex H protein] + CO2. Its function is as follows. The glycine cleavage system catalyzes the degradation of glycine. The P protein binds the alpha-amino group of glycine through its pyridoxal phosphate cofactor; CO(2) is released and the remaining methylamine moiety is then transferred to the lipoamide cofactor of the H protein. This chain is Probable glycine dehydrogenase (decarboxylating) subunit 1 (gcvPA), found in Bacillus subtilis (strain 168).